The primary structure comprises 35 residues: Phosphoribulokinase (35 aa).

The protein belongs to the phosphoribulokinase family.

It localises to the plastid. Its subcellular location is the chloroplast. The enzyme catalyses D-ribulose 5-phosphate + ATP = D-ribulose 1,5-bisphosphate + ADP + H(+). The protein operates within carbohydrate biosynthesis; Calvin cycle. Light regulated via thioredoxin by reversible oxidation/reduction of sulfhydryl/disulfide groups. This is Phosphoribulokinase from Pinus pinaster (Maritime pine).